The following is a 332-amino-acid chain: Homeobox protein DLX-2 (332 aa).

Polar residues predominate over residues 19–28 (ASSTYHQHQQ). The segment at 19–83 (ASSTYHQHQQ…QHPAGGGGGG (65 aa)) is disordered. Over residues 40 to 49 (NSNSSSSNSS) the composition is skewed to low complexity. Residues 55 to 75 (ESPTLPVSTATDSSYYTNQQH) show a composition bias toward polar residues. The homeobox DNA-binding region spans 155 to 214 (VRKPRTIYSSFQLAALQRRFQKTQYLALPERAELAASLGLTQTQVKIWFQNRRSKFKKMW). Disordered regions lie at residues 219 to 272 (IPTE…SSPS) and 304 to 332 (PSQT…GTIF). Phosphoserine is present on S235. Over residues 253–266 (AGGGPGSGGGGAGS) the composition is skewed to gly residues. Residues 310-320 (AHHHHHHHHHA) show a composition bias toward basic residues.

The protein belongs to the distal-less homeobox family. As to quaternary structure, interacts (via homeobox DNA-binding domain) with POU4F2; this interaction enhances retinal ganglion cell (RGC) differentiation. In terms of processing, phosphorylated by serine/threonine kinases. As to expression, expressed only in neural and other ectodermal structures of the head: the brain, the vomeronasal organ, and the preameloblasts of the teeth. Primarily expressed in the germinal cells of the ventral forebrain in the midgestational embryo, and in both dorsal and ventral ventricular zones in late embryogenesis and early postnatal life. Expressed in the inner nuclear layer of the retina.

It localises to the nucleus. Its function is as follows. Acts as a transcriptional activator. Activates transcription of CGA/alpha-GSU, via binding to the downstream activin regulatory element (DARE) in the gene promoter. Plays a role in terminal differentiation of interneurons, such as amacrine and bipolar cells in the developing retina. Likely to play a regulatory role in the development of the ventral forebrain. May play a role in craniofacial patterning and morphogenesis. The protein is Homeobox protein DLX-2 (Dlx2) of Mus musculus (Mouse).